The following is a 339-amino-acid chain: Anthranilate phosphoribosyltransferase (339 aa).

Residues G81, 84-85 (GD), S89, 91-94 (NVSS), 109-117 (KHGNRALSS), and A121 contribute to the 5-phospho-alpha-D-ribose 1-diphosphate site. An anthranilate-binding site is contributed by G81. Position 93 (S93) interacts with Mg(2+). N112 is a binding site for anthranilate. R167 contacts anthranilate. D225 and E226 together coordinate Mg(2+).

This sequence belongs to the anthranilate phosphoribosyltransferase family. In terms of assembly, homodimer. Mg(2+) serves as cofactor.

The enzyme catalyses N-(5-phospho-beta-D-ribosyl)anthranilate + diphosphate = 5-phospho-alpha-D-ribose 1-diphosphate + anthranilate. It functions in the pathway amino-acid biosynthesis; L-tryptophan biosynthesis; L-tryptophan from chorismate: step 2/5. Functionally, catalyzes the transfer of the phosphoribosyl group of 5-phosphorylribose-1-pyrophosphate (PRPP) to anthranilate to yield N-(5'-phosphoribosyl)-anthranilate (PRA). In Brucella suis (strain ATCC 23445 / NCTC 10510), this protein is Anthranilate phosphoribosyltransferase.